The chain runs to 201 residues: Outer-membrane lipoprotein carrier protein (201 aa).

Residues 1–21 (MKKVLLTVCAIALFGSQAAWA) form the signal peptide.

Belongs to the LolA family. As to quaternary structure, monomer.

Its subcellular location is the periplasm. In terms of biological role, participates in the translocation of lipoproteins from the inner membrane to the outer membrane. Only forms a complex with a lipoprotein if the residue after the N-terminal Cys is not an aspartate (The Asp acts as a targeting signal to indicate that the lipoprotein should stay in the inner membrane). The sequence is that of Outer-membrane lipoprotein carrier protein from Proteus mirabilis (strain HI4320).